Reading from the N-terminus, the 209-residue chain is Large ribosomal subunit protein uL3 (209 aa).

A disordered region spans residues 128 to 152; the sequence is QARGPMSHGSRYHRRPGSMGPVDPN.

It belongs to the universal ribosomal protein uL3 family. Part of the 50S ribosomal subunit. Forms a cluster with proteins L14 and L19.

Its function is as follows. One of the primary rRNA binding proteins, it binds directly near the 3'-end of the 23S rRNA, where it nucleates assembly of the 50S subunit. This chain is Large ribosomal subunit protein uL3, found in Halalkalibacterium halodurans (strain ATCC BAA-125 / DSM 18197 / FERM 7344 / JCM 9153 / C-125) (Bacillus halodurans).